Reading from the N-terminus, the 356-residue chain is Phosphate acyltransferase (356 aa).

It belongs to the PlsX family. In terms of assembly, homodimer. Probably interacts with PlsY.

The protein localises to the cytoplasm. The enzyme catalyses a fatty acyl-[ACP] + phosphate = an acyl phosphate + holo-[ACP]. It participates in lipid metabolism; phospholipid metabolism. In terms of biological role, catalyzes the reversible formation of acyl-phosphate (acyl-PO(4)) from acyl-[acyl-carrier-protein] (acyl-ACP). This enzyme utilizes acyl-ACP as fatty acyl donor, but not acyl-CoA. The polypeptide is Phosphate acyltransferase (Bartonella henselae (strain ATCC 49882 / DSM 28221 / CCUG 30454 / Houston 1) (Rochalimaea henselae)).